A 465-amino-acid chain; its full sequence is Cruciform DNA-recognizing protein 1 (465 aa).

2 disordered regions span residues 107–227 and 247–276; these read EAGG…VPNP and RLNKKEEVPEPVAGPIVESSVTEKSPALPQ. Positions 127-151 are enriched in basic residues; it reads NRKKNKRNNKKRRSKLKKKSTKNNK. Ser-153 and Ser-156 each carry phosphoserine. Positions 156 to 165 are enriched in acidic residues; the sequence is SLDDNEEEDG. Positions 160-161 are X-DNA-binding; sequence NE. The span at 166-177 shows a compositional bias: low complexity; it reads VTGTTTEDVTGT. Thr-182 is subject to Phosphothreonine. Ser-271 bears the Phosphoserine mark. Thr-295 is subject to Phosphothreonine. The interval 300–465 is disordered; it reads AVTPLINEPE…FFGKLKKLFK (166 aa). Ser-319 and Ser-343 each carry phosphoserine. The segment covering 337–363 has biased composition (basic and acidic residues); sequence LVEKRESTEGVLDGSKKVENKAKKDEE. A Phosphothreonine modification is found at Thr-366. Composition is skewed to basic and acidic residues over residues 385–398 and 404–428; these read AEGRKSPAVSEEKE and EKGSKEVKRSETSKEKKPSAKEVKK. Residue Ser-394 is modified to Phosphoserine. Position 440 is a phosphoserine (Ser-440). Basic residues predominate over residues 451–465; it reads KKKTGFFGKLKKLFK.

This sequence belongs to the CRP1/MDG1 family. In terms of processing, cleaved in the vicinity of position 160 to give an X-DNA-binding N-terminal subpeptide and a non-DNA-binding C-terminal subpeptide.

In terms of biological role, cruciform DNA-binding protein which exerts an enhancing effect on the cleavage of cruciform DNA (X-DNA) by endonuclease VII from bacteriophage T4. In Saccharomyces cerevisiae (strain ATCC 204508 / S288c) (Baker's yeast), this protein is Cruciform DNA-recognizing protein 1 (CRP1).